The chain runs to 232 residues: Sec-independent protein translocase protein TatB (232 aa).

The chain crosses the membrane as a helical span at residues 1-21 (MFDIGFGELMLLFVIGLVVLG). 2 disordered regions span residues 108–129 (EPHT…GVTP) and 176–232 (AAST…NNDR). 2 stretches are compositionally biased toward low complexity: residues 189–203 (ADSA…ATPA) and 214–232 (RAAT…NNDR).

Belongs to the TatB family. The Tat system comprises two distinct complexes: a TatABC complex, containing multiple copies of TatA, TatB and TatC subunits, and a separate TatA complex, containing only TatA subunits. Substrates initially bind to the TatABC complex, which probably triggers association of the separate TatA complex to form the active translocon.

Its subcellular location is the cell inner membrane. Its function is as follows. Part of the twin-arginine translocation (Tat) system that transports large folded proteins containing a characteristic twin-arginine motif in their signal peptide across membranes. Together with TatC, TatB is part of a receptor directly interacting with Tat signal peptides. TatB may form an oligomeric binding site that transiently accommodates folded Tat precursor proteins before their translocation. This is Sec-independent protein translocase protein TatB from Sodalis glossinidius (strain morsitans).